Consider the following 321-residue polypeptide: Beta-lactamase (321 aa).

An N-terminal signal peptide occupies residues 1–30 (MEKNRKKQIVVLSIALVCIFILVFSLFHKS). The active-site Acyl-ester intermediate is S83. 233-235 (KTG) is a substrate binding site.

The protein belongs to the class-A beta-lactamase family.

It carries out the reaction a beta-lactam + H2O = a substituted beta-amino acid. Its activity is regulated as follows. Inhibited by clavulanic acid. Its function is as follows. Can hydrolyze cephalosporins, penicillins and also cefoxitin; but at a slow rate. This is Beta-lactamase (cfxA) from Phocaeicola vulgatus (Bacteroides vulgatus).